The chain runs to 582 residues: DNA primase (582 aa).

The CHC2-type zinc-finger motif lies at 40–64 (CPFHHEKTPSFTVSQKKQFYHCFGC). Residues 259–341 (EMLLVVEGYM…GRQLKFVFLP (83 aa)) enclose the Toprim domain. Residues Glu265, Asp309, and Asp311 each coordinate Mg(2+).

This sequence belongs to the DnaG primase family. In terms of assembly, monomer. Interacts with DnaB. The cofactor is Zn(2+). Requires Mg(2+) as cofactor.

It catalyses the reaction ssDNA + n NTP = ssDNA/pppN(pN)n-1 hybrid + (n-1) diphosphate.. Its function is as follows. RNA polymerase that catalyzes the synthesis of short RNA molecules used as primers for DNA polymerase during DNA replication. The protein is DNA primase of Pasteurella multocida (strain Pm70).